A 518-amino-acid polypeptide reads, in one-letter code: Chromosomal replication initiator protein DnaA (518 aa).

The interval 1-73 is domain I, interacts with DnaA modulators; it reads MTLAEFWPLC…REELAAGRPA (73 aa). A domain II region spans residues 73–180; the sequence is AFVFKPGEGV…DAEEARYEQT (108 aa). Residues 144 to 180 form a disordered region; that stretch reads HEPRQAAGPASRPESAAVAKARTDAQRDAEEARYEQT. The segment covering 164-177 has biased composition (basic and acidic residues); it reads ARTDAQRDAEEARY. A domain III, AAA+ region region spans residues 181-397; the sequence is NLSPDYTFDT…GAFNRVGASS (217 aa). Positions 225, 227, 228, and 229 each coordinate ATP. A domain IV, binds dsDNA region spans residues 398 to 518; that stretch reads RFMNRPVIDI…YEKLLILIQN (121 aa).

This sequence belongs to the DnaA family. Oligomerizes as a right-handed, spiral filament on DNA at oriC.

It is found in the cytoplasm. Plays an essential role in the initiation and regulation of chromosomal replication. ATP-DnaA binds to the origin of replication (oriC) to initiate formation of the DNA replication initiation complex once per cell cycle. Binds the DnaA box (a 9 base pair repeat at the origin) and separates the double-stranded (ds)DNA. Forms a right-handed helical filament on oriC DNA; dsDNA binds to the exterior of the filament while single-stranded (ss)DNA is stabiized in the filament's interior. The ATP-DnaA-oriC complex binds and stabilizes one strand of the AT-rich DNA unwinding element (DUE), permitting loading of DNA polymerase. After initiation quickly degrades to an ADP-DnaA complex that is not apt for DNA replication. Binds acidic phospholipids. The protein is Chromosomal replication initiator protein DnaA of Neisseria gonorrhoeae (strain ATCC 700825 / FA 1090).